Here is a 62-residue protein sequence, read N- to C-terminus: Small EDRK-rich factor 1 (62 aa).

Basic and acidic residues-rich tracts occupy residues M1–S30 and I50–K62. The segment at M1–K62 is disordered.

Belongs to the SERF family. As to quaternary structure, interacts with SNCA; this interaction promotes the aggregation of SNCA. In terms of tissue distribution, expressed in brain (at protein level). Highly expressed in the testis.

The protein localises to the cytoplasm. It localises to the cytosol. The protein resides in the nucleus. Its function is as follows. Positive regulator of amyloid protein aggregation and proteotoxicity. Induces conformational changes in amyloid proteins, such as APP, HTT, and SNCA, driving them into compact formations preceding the formation of aggregates. In Mus musculus (Mouse), this protein is Small EDRK-rich factor 1 (Serf1).